Consider the following 540-residue polypeptide: Membrane protein insertase YidC (540 aa).

A helical membrane pass occupies residues 6-26 (NILLIALALVSFLLFQQWQVA). The segment covering 36–47 (QAQSSSSLPAPS) has biased composition (low complexity). The disordered stretch occupies residues 36–63 (QAQSSSSLPAPSFADELDPVPGQQQASA). Transmembrane regions (helical) follow at residues 342 to 362 (AFIQ…TFIV), 417 to 437 (LGGC…YWAL), 455 to 475 (LSAQ…MFLI), and 496 to 516 (PVMF…YWLV).

This sequence belongs to the OXA1/ALB3/YidC family. Type 1 subfamily. In terms of assembly, interacts with the Sec translocase complex via SecD. Specifically interacts with transmembrane segments of nascent integral membrane proteins during membrane integration.

Its subcellular location is the cell inner membrane. Required for the insertion and/or proper folding and/or complex formation of integral membrane proteins into the membrane. Involved in integration of membrane proteins that insert both dependently and independently of the Sec translocase complex, as well as at least some lipoproteins. Aids folding of multispanning membrane proteins. The chain is Membrane protein insertase YidC from Vibrio parahaemolyticus serotype O3:K6 (strain RIMD 2210633).